The following is a 681-amino-acid chain: Dipeptidyl carboxypeptidase (681 aa).

Residue histidine 470 coordinates Zn(2+). Glutamate 471 is an active-site residue. Zn(2+)-binding residues include histidine 474 and histidine 477.

It belongs to the peptidase M3 family. Requires Zn(2+) as cofactor.

It is found in the cytoplasm. It carries out the reaction Hydrolysis of unblocked, C-terminal dipeptides from oligopeptides, with broad specificity. Does not hydrolyze bonds in which P1' is Pro, or both P1 and P1' are Gly.. Its activity is regulated as follows. Stimulated by Mn(2+), Mg(2+), Co(2+) and Ca(2+), inhibited by Cu(2+), Ni(2+), Zn(2+), chymostatin and 1,10-phenanthroline. Functionally, removes dipeptides from the C-termini of N-blocked tripeptides, tetrapeptides and larger peptides. The polypeptide is Dipeptidyl carboxypeptidase (Escherichia coli (strain K12)).